Here is a 93-residue protein sequence, read N- to C-terminus: UPF0728 protein C10orf53 (93 aa).

The protein belongs to the UPF0728 family.

This is UPF0728 protein C10orf53 (C10orf53) from Homo sapiens (Human).